The primary structure comprises 61 residues: Small ribosomal subunit protein uS14 (61 aa).

4 residues coordinate Zn(2+): cysteine 24, cysteine 27, cysteine 40, and cysteine 43.

Belongs to the universal ribosomal protein uS14 family. Zinc-binding uS14 subfamily. Part of the 30S ribosomal subunit. Contacts proteins S3 and S10. Zn(2+) serves as cofactor.

Functionally, binds 16S rRNA, required for the assembly of 30S particles and may also be responsible for determining the conformation of the 16S rRNA at the A site. This is Small ribosomal subunit protein uS14 from Limosilactobacillus fermentum (strain NBRC 3956 / LMG 18251) (Lactobacillus fermentum).